Consider the following 259-residue polypeptide: Type III pantothenate kinase (259 aa).

Residue 9–16 (DAGNSRIK) coordinates ATP. Substrate contacts are provided by residues Tyr93 and 100–103 (GSDR). The active-site Proton acceptor is the Asp102. Residue Thr126 coordinates ATP. Thr190 serves as a coordination point for substrate.

It belongs to the type III pantothenate kinase family. In terms of assembly, homodimer. NH4(+) serves as cofactor. K(+) is required as a cofactor.

Its subcellular location is the cytoplasm. The enzyme catalyses (R)-pantothenate + ATP = (R)-4'-phosphopantothenate + ADP + H(+). Its pathway is cofactor biosynthesis; coenzyme A biosynthesis; CoA from (R)-pantothenate: step 1/5. Its function is as follows. Catalyzes the phosphorylation of pantothenate (Pan), the first step in CoA biosynthesis. This chain is Type III pantothenate kinase, found in Burkholderia thailandensis (strain ATCC 700388 / DSM 13276 / CCUG 48851 / CIP 106301 / E264).